Reading from the N-terminus, the 564-residue chain is Plant UBX domain-containing protein 8 (564 aa).

Position 2 is an N-acetylalanine (Ala-2). The 43-residue stretch at 2–44 (ATPNQEAIDTFISITGASDAVALQKLEEHRGDLNQAVNAYFSE) folds into the UBA-like domain. UIM domains are found at residues 198 to 217 (IEEEMIRAAIEASKKEAEGS) and 230 to 249 (EDDDDIAIAVTMSLKSAEEE). The disordered stretch occupies residues 210-229 (SKKEAEGSSNPLLEERPLHM). Disordered stretches follow at residues 267–358 (AVTA…EEHD), 371–423 (IPET…DKEM), and 443–483 (FLEE…QADE). The segment covering 291–300 (FDDDSDDVDE) has biased composition (acidic residues). Residues Ser-295, Ser-324, Ser-326, and Ser-328 each carry the phosphoserine modification. Residues 322-334 (DRSRSGSPEEEHA) show a composition bias toward basic and acidic residues. Over residues 381-395 (FLPPQPRAQPRPPSP) the composition is skewed to pro residues. The stretch at 412 to 478 (VASLQADRDK…DAKEASLPKE (67 aa)) forms a coiled coil. The span at 443 to 475 (FLEEEKKKEEEAQRKLEEEQELERQLDAKEASL) shows a compositional bias: basic and acidic residues. In terms of domain architecture, UBX spans 482 to 560 (DEENAITLLI…GLTSKQEALF (79 aa)).

Interacts with RABA5C/ARA-4.

The protein is Plant UBX domain-containing protein 8 of Arabidopsis thaliana (Mouse-ear cress).